The chain runs to 228 residues: LexA repressor (228 aa).

Positions 26-46 (FDEMKDALDLRSKSGIHRLIT) form a DNA-binding region, H-T-H motif. Active-site for autocatalytic cleavage activity residues include Ser-149 and Lys-187.

It belongs to the peptidase S24 family. Homodimer.

It carries out the reaction Hydrolysis of Ala-|-Gly bond in repressor LexA.. Functionally, represses a number of genes involved in the response to DNA damage (SOS response), including recA and lexA. In the presence of single-stranded DNA, RecA interacts with LexA causing an autocatalytic cleavage which disrupts the DNA-binding part of LexA, leading to derepression of the SOS regulon and eventually DNA repair. The chain is LexA repressor from Cereibacter sphaeroides (strain ATCC 17025 / ATH 2.4.3) (Rhodobacter sphaeroides).